Reading from the N-terminus, the 197-residue chain is Probable adenylyl-sulfate kinase (197 aa).

33 to 40 contributes to the ATP binding site; sequence GLSGSGKS. Catalysis depends on S107, which acts as the Phosphoserine intermediate.

It belongs to the APS kinase family.

The catalysed reaction is adenosine 5'-phosphosulfate + ATP = 3'-phosphoadenylyl sulfate + ADP + H(+). Its pathway is sulfur metabolism; hydrogen sulfide biosynthesis; sulfite from sulfate: step 2/3. Its function is as follows. Catalyzes the synthesis of activated sulfate. The protein is Probable adenylyl-sulfate kinase (cysC) of Bacillus subtilis (strain 168).